We begin with the raw amino-acid sequence, 314 residues long: Olfactory receptor 1C1 (314 aa).

The Extracellular portion of the chain corresponds to 1 to 25 (MEKRNLTVVREFVLLGLPSSAEQQH). A helical membrane pass occupies residues 26–49 (LLSVLFLCMYLATTLGNMLIIATI). The Cytoplasmic portion of the chain corresponds to 50-57 (GFDSHLHS). Residues 58–79 (PMYFFLSNLAFVDICFTSTTVP) traverse the membrane as a helical segment. The Extracellular segment spans residues 80–100 (QMVVNILTGTKTISFAGCLTQ). C97 and C189 are oxidised to a cystine. Residues 101–120 (LFFFVSFVNMDSLLLCVMAY) form a helical membrane-spanning segment. Topologically, residues 121-139 (DRYVAICHPLHYTARMNLC) are cytoplasmic. Residues 140-158 (LCVQLVAGLWLVTYLHALL) form a helical membrane-spanning segment. Residues 159–195 (HTVLIAQLSFCASNIIHHFFCDLNPLLQLSCSDVSFN) are Extracellular-facing. Residues 196–219 (VMIIFAVGGLLALTPLVCILVSYG) traverse the membrane as a helical segment. At 220–236 (LIFSTVLKITSTQGKQR) the chain is on the cytoplasmic side. Residues 237 to 259 (AVSTCSCHLSVVVLFYGTAIAVY) form a helical membrane-spanning segment. The Extracellular segment spans residues 260 to 272 (FSPSSPHMPESDT). Residues 273–292 (LSTIMYSMVAPMLNPFIYTL) traverse the membrane as a helical segment. Residues 293–314 (RNRDMKRGLQKMLLKCTVFQQQ) are Cytoplasmic-facing.

This sequence belongs to the G-protein coupled receptor 1 family.

It localises to the cell membrane. Its function is as follows. Odorant receptor. The protein is Olfactory receptor 1C1 (OR1C1) of Homo sapiens (Human).